A 275-amino-acid chain; its full sequence is Intercellular adhesion molecule 2 (275 aa).

A signal peptide spans 1-24 (MSSFGYRTLTVALFALICCPGSDE). The Extracellular segment spans residues 25-223 (KVFEVHVRPK…EIYEPVSDSQ (199 aa)). The 58-residue stretch at 41–98 (KASLEVNCSTTCNQPEVGGLETSLDKILLDEQAQWKHYLVSNISHDTVLQCHFTCSGK) folds into the Ig-like C2-type 1 domain. Asn47, Asn82, Asn105, Asn153, Asn158, Asn176, and Asn187 each carry an N-linked (GlcNAc...) asparagine glycan. Disulfide bonds link Cys48–Cys91 and Cys52–Cys95. One can recognise an Ig-like C2-type 2 domain in the interval 127–197 (GKSFTIECRV…FSCLAVLDLI (71 aa)). A disulfide bridge links Cys134 with Cys190. A helical transmembrane segment spans residues 224-248 (MVIIVTVVSVLLSLFVTSVLLCFIF). The Cytoplasmic segment spans residues 249–275 (GQHLRQQRMGTYGVRAAWRRLPQAFRP). Residues 251-275 (HLRQQRMGTYGVRAAWRRLPQAFRP) are required for interaction with EZR, MSN and RDX and co-localization to microvilli.

This sequence belongs to the immunoglobulin superfamily. ICAM family. Interacts with RDX, EZR and MSN.

The protein resides in the membrane. It localises to the cell projection. It is found in the microvillus. Functionally, ICAM proteins are ligands for the leukocyte adhesion protein LFA-1 (integrin alpha-L/beta-2). ICAM2 may play a role in lymphocyte recirculation by blocking LFA-1-dependent cell adhesion. It mediates adhesive interactions important for antigen-specific immune response, NK-cell mediated clearance, lymphocyte recirculation, and other cellular interactions important for immune response and surveillance. In Gorilla gorilla gorilla (Western lowland gorilla), this protein is Intercellular adhesion molecule 2 (ICAM2).